A 480-amino-acid polypeptide reads, in one-letter code: EGF-like repeat and discoidin I-like domain-containing protein 3 (480 aa).

A signal peptide spans methionine 1 to glycine 23. The EGF-like 1 domain maps to aspartate 24–serine 60. Intrachain disulfides connect cysteine 26–cysteine 37, cysteine 31–cysteine 48, and cysteine 50–cysteine 59. Threonine 73 is a glycosylation site (O-linked (GalNAc...) threonine). EGF-like domains follow at residues serine 74–glutamine 117 and asparagine 119–glutamine 155. Disulfide bonds link cysteine 78–cysteine 89, cysteine 83–cysteine 105, and cysteine 107–cysteine 116. The O-linked (Fuc...) threonine glycan is linked to threonine 88. The Cell attachment site signature appears at arginine 96 to aspartate 98. 3 residues coordinate Ca(2+): asparagine 119, isoleucine 120, and glutamate 122. 6 cysteine pairs are disulfide-bonded: cysteine 123–cysteine 134, cysteine 128–cysteine 143, cysteine 145–cysteine 154, cysteine 158–cysteine 314, cysteine 301–cysteine 305, and cysteine 319–cysteine 476. Residues aspartate 136 and leucine 137 each coordinate Ca(2+). Asparagine 140 is a glycosylation site (N-linked (GlcNAc...) asparagine). F5/8 type C domains follow at residues cysteine 158 to cysteine 314 and cysteine 319 to cysteine 476.

In terms of tissue distribution, expressed in angioblasts and early endothelial cells. By embryonic day 13.5, also expressed in a restricted group of non-endothelial cells including chondrocytes and retinal neurons.

The protein localises to the secreted. In terms of biological role, promotes adhesion of endothelial cells through interaction with the alpha-v/beta-3 integrin receptor. Inhibits formation of vascular-like structures. May be involved in regulation of vascular morphogenesis of remodeling in embryonic development. This Mus musculus (Mouse) protein is EGF-like repeat and discoidin I-like domain-containing protein 3 (Edil3).